Reading from the N-terminus, the 150-residue chain is Transcriptional regulator MraZ (150 aa).

SpoVT-AbrB domains lie at 11 to 53 and 82 to 125; these read TYTP…PFDE and AVDQ…NKDT.

This sequence belongs to the MraZ family. In terms of assembly, forms oligomers.

It localises to the cytoplasm. The protein resides in the nucleoid. The sequence is that of Transcriptional regulator MraZ from Bifidobacterium longum (strain NCC 2705).